Here is a 167-residue protein sequence, read N- to C-terminus: Ribosome-binding factor A (167 aa).

The interval 122–167 (LAASAKHAGEADPYKGDSPEDIDEDDFDEEDTDLSGDNDLDEDANR) is disordered. Over residues 128–139 (HAGEADPYKGDS) the composition is skewed to basic and acidic residues. The span at 140 to 167 (PEDIDEDDFDEEDTDLSGDNDLDEDANR) shows a compositional bias: acidic residues.

Belongs to the RbfA family. As to quaternary structure, monomer. Binds 30S ribosomal subunits, but not 50S ribosomal subunits or 70S ribosomes.

It localises to the cytoplasm. Functionally, one of several proteins that assist in the late maturation steps of the functional core of the 30S ribosomal subunit. Associates with free 30S ribosomal subunits (but not with 30S subunits that are part of 70S ribosomes or polysomes). Required for efficient processing of 16S rRNA. May interact with the 5'-terminal helix region of 16S rRNA. The polypeptide is Ribosome-binding factor A (Paenarthrobacter aurescens (strain TC1)).